Here is a 142-residue protein sequence, read N- to C-terminus: Large ribosomal subunit protein uL13 (142 aa).

This sequence belongs to the universal ribosomal protein uL13 family. As to quaternary structure, part of the 50S ribosomal subunit.

This protein is one of the early assembly proteins of the 50S ribosomal subunit, although it is not seen to bind rRNA by itself. It is important during the early stages of 50S assembly. In Polaromonas sp. (strain JS666 / ATCC BAA-500), this protein is Large ribosomal subunit protein uL13.